A 20-amino-acid chain; its full sequence is Antifungal protein 2 large subunit (20 aa).

The segment at Pro1–Glu20 is disordered.

As to quaternary structure, heterodimer of a large and a small subunit.

Its function is as follows. Possesses antifungal activity against P.infestans but not F.graminearum. The chain is Antifungal protein 2 large subunit from Malva parviflora (Little mallow).